A 122-amino-acid chain; its full sequence is Large ribosomal subunit protein uL14 (122 aa).

Belongs to the universal ribosomal protein uL14 family. In terms of assembly, part of the 50S ribosomal subunit. Forms a cluster with proteins L3 and L19. In the 70S ribosome, L14 and L19 interact and together make contacts with the 16S rRNA in bridges B5 and B8.

In terms of biological role, binds to 23S rRNA. Forms part of two intersubunit bridges in the 70S ribosome. The protein is Large ribosomal subunit protein uL14 of Phenylobacterium zucineum (strain HLK1).